Consider the following 333-residue polypeptide: Dioxygenase cnsJ (333 aa).

Fe cation-binding residues include His153, Asp155, and His235. Residues 309 to 333 (NAQPEGEDDGGMKPNEGEHVVEAQI) are disordered. Over residues 323 to 333 (NEGEHVVEAQI) the composition is skewed to basic and acidic residues.

This sequence belongs to the PhyH family. Homodimer. Requires Fe cation as cofactor.

Its pathway is alkaloid biosynthesis. In terms of biological role, dioxygenase; part of the gene cluster that mediates the biosynthesis of communesins, a prominent class of indole alkaloids with great potential as pharmaceuticals. Communesins are biosynthesized by the coupling of tryptamine and aurantioclavine, two building blocks derived from L-tryptophan. The L-tryptophan decarboxylase cnsB converts L-tryptophan to tryptamine, whereas the tryptophan dimethylallyltransferase cnsF converts L-tryptophan to 4-dimethylallyl tryptophan which is further transformed to aurantioclavine by the aurantioclavine synthase cnsA, probably aided by the catalase cnsD. The cytochrome P450 monooxygenase cnsC catalyzes the heterodimeric coupling between the two different indole moieties, tryptamine and aurantioclavine, to construct vicinal quaternary stereocenters and yield the heptacyclic communesin scaffold. The O-methyltransferase cnsE then methylates the communesin scaffold to produce communesin K, the simplest characterized communesin that contains the heptacyclic core. The dioxygenase cnsJ converts communesin K into communesin I. Acylation to introduce the hexadienyl group at position N16 of communesin I by the acyltransferase cnsK leads to the production of communesin B. The hexadienyl group is produced by the highly reducing polyketide synthase cnsI, before being hydrolytically removed from cnsI by the serine hydrolase cnsH, converted into hexadienyl-CoA by the CoA ligase cnsG, and then transferred to communesin I by cnsK. Surprisingly, cnsK may also be a promiscuous acyltransferase that can tolerate a range of acyl groups, including acetyl-, propionyl-, and butyryl-CoA, which lead to communesins A, G and H respectively. The roles of the alpha-ketoglutarate-dependent dioxygenases cnsM and cnsP have still to be determined. The sequence is that of Dioxygenase cnsJ from Penicillium expansum (Blue mold rot fungus).